The primary structure comprises 454 residues: MTTKIKTQWTCTECGTHSPKWLGQCSGCLQWNTLVEERTAPKLNTSSYSSSSSIPIPLNNVEFQEEIRIHTQAQGWNRLLGGGTVRGSLALLGGEPGIGKSTLLLQISSQFAAAGHKVLYVCGEESVSQTSLRAQRLQISSNNIFLFPETNLEDIKQQIDNIAPDILVIDSIQIIFSPSLSSAPGSVAQVRETTAELMHIAKQKQITTFIIGHVTKSGEIAGPRILEHLVDTVLYFEGNAHANYRMIRSVKNRFGPTNELLILSMHTDGLREVENPSGLFLQEKIVETTGSTIIPIVEGSETLLIEVQALVSSSPFSNPVRKTSGFDPNRFSLLLAVLEKRANVKLYTSDVFLSIAGGLKITQPSADLGAVLSVVSSLYNRYLPKNYTYTGEIGLGGEIRHVSHMEHRIKESIIMGFKGIVMPFGQIKGLPKEFLDQIDIIGVKTIKDAVRLLQ.

The C4-type zinc-finger motif lies at 11-28; that stretch reads CTECGTHSPKWLGQCSGC. 94 to 101 serves as a coordination point for ATP; the sequence is GEPGIGKS. The RadA KNRFG motif signature appears at 251–255; it reads KNRFG. The interval 350 to 454 is lon-protease-like; it reads DVFLSIAGGL…TIKDAVRLLQ (105 aa).

This sequence belongs to the RecA family. RadA subfamily.

Its function is as follows. DNA-dependent ATPase involved in processing of recombination intermediates, plays a role in repairing DNA breaks. Stimulates the branch migration of RecA-mediated strand transfer reactions, allowing the 3' invading strand to extend heteroduplex DNA faster. Binds ssDNA in the presence of ADP but not other nucleotides, has ATPase activity that is stimulated by ssDNA and various branched DNA structures, but inhibited by SSB. Does not have RecA's homology-searching function. The polypeptide is DNA repair protein RadA (Chlamydia trachomatis serovar D (strain ATCC VR-885 / DSM 19411 / UW-3/Cx)).